We begin with the raw amino-acid sequence, 493 residues long: Cholesteryl ester transfer protein (493 aa).

The N-terminal stretch at 1–17 (MLAATVLTLALLGNAHA) is a signal peptide. A glycan (N-linked (GlcNAc...) (complex) asparagine) is linked at Asn105. Cys160 and Cys201 are oxidised to a cystine. Residues Asn257, Asn358, and Asn413 are each glycosylated (N-linked (GlcNAc...) asparagine).

Belongs to the BPI/LBP/Plunc superfamily. BPI/LBP family. In terms of tissue distribution, expressed by the liver and secreted in plasma.

It is found in the secreted. The enzyme catalyses cholesteryl (9Z-octadecenoate)(in) = cholesteryl (9Z-octadecenoate)(out). It catalyses the reaction 1,2,3-tri-(9Z-octadecenoyl)-glycerol(in) = 1,2,3-tri-(9Z-octadecenoyl)-glycerol(out). The catalysed reaction is cholesteryl (9Z,12Z)-octadecadienoate(in) = cholesteryl (9Z,12Z)-octadecadienoate(out). In terms of biological role, involved in the transfer of neutral lipids, including cholesteryl ester and triglyceride, among lipoprotein particles. Allows the net movement of cholesteryl ester from high density lipoproteins/HDL to triglyceride-rich very low density lipoproteins/VLDL, and the equimolar transport of triglyceride from VLDL to HDL. Regulates the reverse cholesterol transport, by which excess cholesterol is removed from peripheral tissues and returned to the liver for elimination. The polypeptide is Cholesteryl ester transfer protein (Homo sapiens (Human)).